A 279-amino-acid polypeptide reads, in one-letter code: MAWFKRVKPSIRPTDKRDMPEGLWWKCEECGAMLHKKQFEDHFFTCAECGHHFRISPYKYFSILFDDDKYVEFDDHLRSADPLGFVDTKKYPDRVHDTIEKSGKTEACRNAHGESGGRPLVVSAMDFGFIGGSMGSVVGEKIARAVDKSLELDAPLLVISQSGGARMMEGAFSLMQMAKTAARLTRLSERKLPFVSLMTDPTMGGISASFAMLGDINISEPKALIGFAGPRVIRDTIKRDLPEGFQRAEFLLEQGFLDRVIHRRDLKNELVTLFSMLKV.

The CoA carboxyltransferase N-terminal domain maps to 23–279 (LWWKCEECGA…LVTLFSMLKV (257 aa)). Residues Cys27, Cys30, Cys46, and Cys49 each coordinate Zn(2+). Residues 27–49 (CEECGAMLHKKQFEDHFFTCAEC) form a C4-type zinc finger.

The protein belongs to the AccD/PCCB family. In terms of assembly, acetyl-CoA carboxylase is a heterohexamer composed of biotin carboxyl carrier protein (AccB), biotin carboxylase (AccC) and two subunits each of ACCase subunit alpha (AccA) and ACCase subunit beta (AccD). Requires Zn(2+) as cofactor.

The protein resides in the cytoplasm. It catalyses the reaction N(6)-carboxybiotinyl-L-lysyl-[protein] + acetyl-CoA = N(6)-biotinyl-L-lysyl-[protein] + malonyl-CoA. It participates in lipid metabolism; malonyl-CoA biosynthesis; malonyl-CoA from acetyl-CoA: step 1/1. Its function is as follows. Component of the acetyl coenzyme A carboxylase (ACC) complex. Biotin carboxylase (BC) catalyzes the carboxylation of biotin on its carrier protein (BCCP) and then the CO(2) group is transferred by the transcarboxylase to acetyl-CoA to form malonyl-CoA. This chain is Acetyl-coenzyme A carboxylase carboxyl transferase subunit beta, found in Pelodictyon phaeoclathratiforme (strain DSM 5477 / BU-1).